The primary structure comprises 294 residues: Ethylene-inducing xylanase 3 (294 aa).

A signal peptide spans 1–19 (MVCFSSLFVAASAIAGVFA). In terms of domain architecture, GH11 spans 31–226 (QSTPSSQGTH…SSGSARINVA (196 aa)). The Nucleophile role is filled by E122. E213 (proton donor) is an active-site residue. The region spanning 259 to 294 (SCAARWGQCGGSGWNGATCCSAGTCQAQNQWYSQCL) is the CBM1 domain.

The protein belongs to the glycosyl hydrolase 11 (cellulase G) family.

The enzyme catalyses Endohydrolysis of (1-&gt;4)-beta-D-xylosidic linkages in xylans.. Its pathway is glycan degradation; xylan degradation. Its function is as follows. Endo-1,4-beta-xylanase involved in the hydrolysis of xylan, a major structural heterogeneous polysaccharide found in plant biomass representing the second most abundant polysaccharide in the biosphere, after cellulose. Exhibits immunity-inducing activity in Nicotiana benthamiana. Can induce strong oxidative burst, activate the expression of defense-related genes, and increase resistance against oomycete and fungal pathogens in N.benthamiana. The chain is Ethylene-inducing xylanase 3 from Verticillium dahliae (strain VdLs.17 / ATCC MYA-4575 / FGSC 10137) (Verticillium wilt).